Here is a 447-residue protein sequence, read N- to C-terminus: Phosphoglucosamine mutase (447 aa).

Ser102 (phosphoserine intermediate) is an active-site residue. Ser102, Asp241, Asp243, and Asp245 together coordinate Mg(2+). Residue Ser102 is modified to Phosphoserine.

The protein belongs to the phosphohexose mutase family. Mg(2+) is required as a cofactor. Post-translationally, activated by phosphorylation.

It catalyses the reaction alpha-D-glucosamine 1-phosphate = D-glucosamine 6-phosphate. Catalyzes the conversion of glucosamine-6-phosphate to glucosamine-1-phosphate. In Ruegeria sp. (strain TM1040) (Silicibacter sp.), this protein is Phosphoglucosamine mutase.